The following is a 547-amino-acid chain: ATP synthase subunit alpha (547 aa).

172–179 (GDRKTGKT) contributes to the ATP binding site.

It belongs to the ATPase alpha/beta chains family. F-type ATPases have 2 components, CF(1) - the catalytic core - and CF(0) - the membrane proton channel. CF(1) has five subunits: alpha(3), beta(3), gamma(1), delta(1), epsilon(1). CF(0) has three main subunits: a(1), b(2) and c(9-12). The alpha and beta chains form an alternating ring which encloses part of the gamma chain. CF(1) is attached to CF(0) by a central stalk formed by the gamma and epsilon chains, while a peripheral stalk is formed by the delta and b chains.

It localises to the cell membrane. The enzyme catalyses ATP + H2O + 4 H(+)(in) = ADP + phosphate + 5 H(+)(out). Produces ATP from ADP in the presence of a proton gradient across the membrane. The alpha chain is a regulatory subunit. This chain is ATP synthase subunit alpha, found in Rhodococcus opacus (strain B4).